An 84-amino-acid chain; its full sequence is GTP cyclohydrolase 1 feedback regulatory protein (84 aa).

It belongs to the GFRP family. As to quaternary structure, homopentamer. Forms a complex with GCH1 where a GCH1 homodecamer is sandwiched by two GFRP homopentamers.

The protein resides in the nucleus. The protein localises to the nucleus membrane. It is found in the cytoplasm. It localises to the cytosol. Functionally, mediates tetrahydrobiopterin inhibition of GTP cyclohydrolase 1. This chain is GTP cyclohydrolase 1 feedback regulatory protein (gchfr), found in Xenopus laevis (African clawed frog).